The sequence spans 129 residues: Small ribosomal subunit protein uS8 (129 aa).

The protein belongs to the universal ribosomal protein uS8 family. In terms of assembly, part of the 30S ribosomal subunit. Contacts proteins S5 and S12.

Its function is as follows. One of the primary rRNA binding proteins, it binds directly to 16S rRNA central domain where it helps coordinate assembly of the platform of the 30S subunit. This chain is Small ribosomal subunit protein uS8, found in Colwellia psychrerythraea (strain 34H / ATCC BAA-681) (Vibrio psychroerythus).